The sequence spans 181 residues: Small ribosomal subunit protein uS4 (181 aa).

Positions arginine 108–asparagine 177 constitute an S4 RNA-binding domain. The interval glycine 161–arginine 181 is disordered. The span at glycine 169–arginine 181 shows a compositional bias: basic and acidic residues.

This sequence belongs to the universal ribosomal protein uS4 family. In terms of assembly, part of the 30S ribosomal subunit. Contacts protein S5. The interaction surface between S4 and S5 is involved in control of translational fidelity.

One of the primary rRNA binding proteins, it binds directly to 16S rRNA where it nucleates assembly of the body of the 30S subunit. In terms of biological role, with S5 and S12 plays an important role in translational accuracy. The sequence is that of Small ribosomal subunit protein uS4 from Methanosphaerula palustris (strain ATCC BAA-1556 / DSM 19958 / E1-9c).